Here is a 364-residue protein sequence, read N- to C-terminus: tRNA N6-adenosine threonylcarbamoyltransferase (364 aa).

Fe cation-binding residues include His115 and His119. Substrate-binding positions include 137–141 (LVSGG), Asp170, Gly183, and Asn288. Residue Asp316 participates in Fe cation binding.

Belongs to the KAE1 / TsaD family. Fe(2+) is required as a cofactor.

It localises to the cytoplasm. The catalysed reaction is L-threonylcarbamoyladenylate + adenosine(37) in tRNA = N(6)-L-threonylcarbamoyladenosine(37) in tRNA + AMP + H(+). Required for the formation of a threonylcarbamoyl group on adenosine at position 37 (t(6)A37) in tRNAs that read codons beginning with adenine. Is involved in the transfer of the threonylcarbamoyl moiety of threonylcarbamoyl-AMP (TC-AMP) to the N6 group of A37, together with TsaE and TsaB. TsaD likely plays a direct catalytic role in this reaction. In Bartonella tribocorum (strain CIP 105476 / IBS 506), this protein is tRNA N6-adenosine threonylcarbamoyltransferase.